We begin with the raw amino-acid sequence, 675 residues long: uncharacterized protein (675 aa).

Transmembrane regions (helical) follow at residues 2 to 22, 397 to 417, 448 to 468, and 481 to 501; these read QHTF…DFFF, LFLL…VFIA, LLVA…LCCY, and IFVY…TYAA. Disordered regions lie at residues 616–635 and 646–675; these read YSPN…DIND and QRMG…ELSD. Residues 665-675 are compositionally biased toward acidic residues; that stretch reads VFSESDEELSD. At Ser669 the chain carries Phosphoserine.

The protein belongs to the 1-acyl-sn-glycerol-3-phosphate acyltransferase family.

It is found in the endoplasmic reticulum membrane. This is an uncharacterized protein from Schizosaccharomyces pombe (strain 972 / ATCC 24843) (Fission yeast).